Consider the following 501-residue polypeptide: Dynein regulatory complex subunit 5 (501 aa).

A compositionally biased stretch (polar residues) spans 1-23; the sequence is MQETVTTSALLDPSHSSVSTQDK. Disordered stretches follow at residues 1-56 and 203-222; these read MQET…HPGA and PAQLRPGDQSDSGSEGEMEE. The span at 24–34 shows a compositional bias: low complexity; it reads SSTGGHTSSTG. Polar residues predominate over residues 35-49; the sequence is PQPSKPSITPVSAKS. LRR repeat units lie at residues 308-321, 335-355, 363-383, 391-411, and 419-439; these read VLEELDLSHNLIGD, RLRVLNLANNQVRAPGAQSLA, NLISLNLRLNCIEDEGGQALA, CLTTLHLGGNELSEPTATLLS, and TLTSINLSCNHIGLDGGKQLL.

It belongs to the DRC5 family. In terms of assembly, component of the nexin-dynein regulatory complex (N-DRC). Interacts with DRC1. Interacts with FBXL13/DRC6, DRC3 and DRC7.

Its subcellular location is the cell projection. The protein resides in the cilium. The protein localises to the flagellum. It is found in the cytoplasm. It localises to the cytoskeleton. Its subcellular location is the flagellum axoneme. Component of the nexin-dynein regulatory complex (N-DRC) a key regulator of ciliary/flagellar motility which maintains the alignment and integrity of the distal axoneme and regulates microtubule sliding in motile axonemes. May play a role in the assembly of N-DRC. May be required for sperm motility. This chain is Dynein regulatory complex subunit 5 (TCTE1), found in Macaca fascicularis (Crab-eating macaque).